The sequence spans 386 residues: Patatin-10 (386 aa).

The first 23 residues, 1-23 (MATTKSFLILFFMILATTSSTCA), serve as a signal peptide directing secretion. The PNPLA domain maps to 32–229 (LSIDGGGIKG…TVGDPALLSL (198 aa)). Positions 36-41 (GGGIKG) match the GXGXXG motif. Positions 75 to 79 (GTSTG) match the GXSXG motif. The active-site Nucleophile is the Ser77. An N-linked (GlcNAc...) asparagine glycan is attached at Asn115. Asp215 serves as the catalytic Proton acceptor. Residues 215 to 217 (DGG) carry the DGA/G motif. Residues 321 to 384 (ENALTGTTTE…NRKKLRANKA (64 aa)) are a coiled coil.

This sequence belongs to the patatin family. Tuber.

The protein resides in the vacuole. Its function is as follows. Probable lipolytic acyl hydrolase (LAH), an activity which is thought to be involved in the response of tubers to pathogens. This Solanum tuberosum (Potato) protein is Patatin-10.